The chain runs to 144 residues: Nucleoside diphosphate kinase (144 aa).

Residues lysine 11, phenylalanine 59, arginine 87, threonine 93, arginine 104, and asparagine 114 each contribute to the ATP site. Histidine 117 functions as the Pros-phosphohistidine intermediate in the catalytic mechanism.

It belongs to the NDK family. As to quaternary structure, homotetramer. It depends on Mg(2+) as a cofactor.

It localises to the cytoplasm. It carries out the reaction a 2'-deoxyribonucleoside 5'-diphosphate + ATP = a 2'-deoxyribonucleoside 5'-triphosphate + ADP. The enzyme catalyses a ribonucleoside 5'-diphosphate + ATP = a ribonucleoside 5'-triphosphate + ADP. Its function is as follows. Major role in the synthesis of nucleoside triphosphates other than ATP. The ATP gamma phosphate is transferred to the NDP beta phosphate via a ping-pong mechanism, using a phosphorylated active-site intermediate. This Baumannia cicadellinicola subsp. Homalodisca coagulata protein is Nucleoside diphosphate kinase.